We begin with the raw amino-acid sequence, 166 residues long: NADH-ubiquinone oxidoreductase chain 6 (166 aa).

The next 5 membrane-spanning stretches (helical) occupy residues 1-21 (MMYFVYLLSILLVLGFMAFAS), 26-46 (IYGGLSLVLSGGVGCGIVVSL), 47-67 (GGSFLGLIVFLVYLGGMLVVF), 87-107 (VFTNLLIMVGMLGVIWYYFSG), and 139-159 (CGGWELIFSGWILFLTIFVVL).

Belongs to the complex I subunit 6 family. Core subunit of respiratory chain NADH dehydrogenase (Complex I) which is composed of 45 different subunits.

It is found in the mitochondrion inner membrane. The enzyme catalyses a ubiquinone + NADH + 5 H(+)(in) = a ubiquinol + NAD(+) + 4 H(+)(out). Its function is as follows. Core subunit of the mitochondrial membrane respiratory chain NADH dehydrogenase (Complex I) which catalyzes electron transfer from NADH through the respiratory chain, using ubiquinone as an electron acceptor. Essential for the catalytic activity and assembly of complex I. The sequence is that of NADH-ubiquinone oxidoreductase chain 6 (MT-ND6) from Ornithorhynchus anatinus (Duckbill platypus).